A 347-amino-acid polypeptide reads, in one-letter code: NADH-ubiquinone oxidoreductase chain 2 (347 aa).

The next 11 helical transmembrane spans lie at 3–23, 25–45, 59–79, 96–116, 122–142, 149–169, 178–198, 200–220, 240–260, 274–294, and 326–346; these read PMTS…VLMS, HWFM…PILM, YFLT…INLM, TLIT…FWVP, VSLS…LSLL, INTN…GWGG, IMAY…IYNP, LSLL…MLLI, ITTM…LTGF, NSVI…FFYM, and MTML…FISL.

Belongs to the complex I subunit 2 family. Core subunit of respiratory chain NADH dehydrogenase (Complex I) which is composed of 45 different subunits. Interacts with TMEM242.

Its subcellular location is the mitochondrion inner membrane. It carries out the reaction a ubiquinone + NADH + 5 H(+)(in) = a ubiquinol + NAD(+) + 4 H(+)(out). Functionally, core subunit of the mitochondrial membrane respiratory chain NADH dehydrogenase (Complex I) which catalyzes electron transfer from NADH through the respiratory chain, using ubiquinone as an electron acceptor. Essential for the catalytic activity and assembly of complex I. The sequence is that of NADH-ubiquinone oxidoreductase chain 2 from Sylvisorex granti (Grant's forest shrew).